A 380-amino-acid polypeptide reads, in one-letter code: tRNA-specific 2-thiouridylase MnmA (380 aa).

ATP-binding positions include 9–16 and methionine 35; that span reads GVSGGVDS. An interaction with target base in tRNA region spans residues 94-96; that stretch reads NPD. Cysteine 99 (nucleophile) is an active-site residue. Cysteine 99 and cysteine 195 are oxidised to a cystine. Residue glycine 123 participates in ATP binding. An interaction with tRNA region spans residues 145–147; it reads KDQ. Cysteine 195 acts as the Cysteine persulfide intermediate in catalysis. Residues 308 to 309 form an interaction with tRNA region; the sequence is RY.

The protein belongs to the MnmA/TRMU family.

It localises to the cytoplasm. It catalyses the reaction S-sulfanyl-L-cysteinyl-[protein] + uridine(34) in tRNA + AH2 + ATP = 2-thiouridine(34) in tRNA + L-cysteinyl-[protein] + A + AMP + diphosphate + H(+). Catalyzes the 2-thiolation of uridine at the wobble position (U34) of tRNA, leading to the formation of s(2)U34. This Stenotrophomonas maltophilia (strain R551-3) protein is tRNA-specific 2-thiouridylase MnmA.